A 120-amino-acid polypeptide reads, in one-letter code: Protein GP96 (120 aa).

Belongs to the herpesviridae UL96 family.

The polypeptide is Protein GP96 (Cavia porcellus (Guinea pig)).